A 532-amino-acid chain; its full sequence is MSLSESLAKYGITGATNIVHNPSHEELFAAETQASLEGFEKGTVTEMGAVNVMTGVYTGRSPKDKFIVKNEASKEIWWTSDEFKNDNKPVTEEAWAQLKALAGKELSNKPLYVVDLFCGANENTRLKIRFVMEVAWQAHFVTNMFIRPTEEELKGFEPDFVVLNASKAKVENFKELGLNSETAVVFNLAEKMQIILNTWYGGEMKKGMFSMMNFYLPLQGIAAMHCSANTDLEGKNTAIFFGLSGTGKTTLSTDPKRLLIGDDEHGWDDDGVFNFEGGCYAKVINLSKENEPDIWGAIKRNALLENVTVDANGKVDFADKSVTENTRVSYPIFHIKNIVKPVSKAPAAKRVIFLSADAFGVLPPVSILSKEQTKYYFLSGFTAKLAGTERGITEPTPTFSSCFGAAFLTLPPTKYAEVLVKRMEASGAKAYLVNTGWNGTGKRISIKDTRGIIDAILDGSIDTANTATIPYFNFTVPTELKGVDTKILDPRNTYADASEWEVKAKDLAERFQKNFKKFESLGGDLVKAGPQL.

Arg60, Tyr200, and Lys206 together coordinate substrate. ATP-binding positions include Lys206, His225, and 242-250 (GLSGTGKTT). Mn(2+) contacts are provided by Lys206 and His225. Ser244 serves as a coordination point for substrate. Asp263 lines the Mn(2+) pocket. ATP is bound by residues Glu291, Arg327, 443–444 (RI), and Thr449. Arg327 is a binding site for substrate.

The protein belongs to the phosphoenolpyruvate carboxykinase (ATP) family. As to quaternary structure, monomer. The cofactor is Mn(2+).

The protein resides in the cytoplasm. The enzyme catalyses oxaloacetate + ATP = phosphoenolpyruvate + ADP + CO2. It functions in the pathway carbohydrate biosynthesis; gluconeogenesis. Inhibited by p-chloromercuribenzoate. Functionally, involved in gluconeogenesis. Catalyzes the conversion of oxaloacetate (OAA) to phosphoenolpyruvate (PEP) through direct phosphoryl transfer between the nucleoside triphosphate and OAA. This chain is Phosphoenolpyruvate carboxykinase (ATP), found in Anaerobiospirillum succiniciproducens.